The chain runs to 568 residues: Nucleoprotein (568 aa).

The segment at 54 to 240 (MRKEKRDDSD…IDGNKSAINI (187 aa)) is binding site for the cap structure m7GTP. Positions 388 and 390 each coordinate Mn(2+). 4 residues coordinate Zn(2+): Glu398, Cys505, His508, and Cys528. Residue Asp532 participates in Mn(2+) binding.

This sequence belongs to the arenaviridae nucleocapsid protein family. Homomultimerizes to form the nucleocapsid. Binds to viral genomic RNA. Interacts with glycoprotein G2. Interacts with protein Z; this interaction probably directs the encapsidated genome to budding sites. Interacts with protein L; this interaction does not interfere with Z-L interaction. Interacts with host IKBKE (via Protein kinase domain); the interaction inhibits IKBKE kinase activity.

Its subcellular location is the virion. It localises to the host cytoplasm. Encapsidates the genome, protecting it from nucleases. The encapsidated genomic RNA is termed the nucleocapsid (NC). Serves as template for viral transcription and replication. The increased presence of protein N in host cell does not seem to trigger the switch from transcription to replication as observed in other negative strain RNA viruses. Through the interaction with host IKBKE, strongly inhibits the phosphorylation and nuclear translocation of host IRF3, a protein involved in interferon activation pathway, leading to the inhibition of interferon-beta and IRF3-dependent promoters activation. Also encodes a functional 3'-5' exoribonuclease that degrades preferentially dsRNA substrates and thereby participates in the suppression of interferon induction. In Praomys (African soft-furred rats), this protein is Nucleoprotein.